Consider the following 104-residue polypeptide: L-rhamnose mutarotase (104 aa).

Tyrosine 18 provides a ligand contact to substrate. The active-site Proton donor is the histidine 22. Residues tyrosine 41 and 76-77 (WW) contribute to the substrate site.

Belongs to the rhamnose mutarotase family. Homodimer.

Its subcellular location is the cytoplasm. It catalyses the reaction alpha-L-rhamnose = beta-L-rhamnose. It functions in the pathway carbohydrate metabolism; L-rhamnose metabolism. In terms of biological role, involved in the anomeric conversion of L-rhamnose. The sequence is that of L-rhamnose mutarotase from Citrobacter koseri (strain ATCC BAA-895 / CDC 4225-83 / SGSC4696).